Here is a 180-residue protein sequence, read N- to C-terminus: Probable chorismate pyruvate-lyase (180 aa).

Substrate-binding residues include arginine 82, leucine 120, and glutamate 165.

The protein belongs to the UbiC family.

It is found in the cytoplasm. It catalyses the reaction chorismate = 4-hydroxybenzoate + pyruvate. Its pathway is cofactor biosynthesis; ubiquinone biosynthesis. In terms of biological role, removes the pyruvyl group from chorismate, with concomitant aromatization of the ring, to provide 4-hydroxybenzoate (4HB) for the ubiquinone pathway. This Photobacterium profundum (strain SS9) protein is Probable chorismate pyruvate-lyase.